The sequence spans 100 residues: Urease subunit gamma (100 aa).

Belongs to the urease gamma subunit family. In terms of assembly, heterotrimer of UreA (gamma), UreB (beta) and UreC (alpha) subunits. Three heterotrimers associate to form the active enzyme.

It localises to the cytoplasm. It carries out the reaction urea + 2 H2O + H(+) = hydrogencarbonate + 2 NH4(+). Its pathway is nitrogen metabolism; urea degradation; CO(2) and NH(3) from urea (urease route): step 1/1. The sequence is that of Urease subunit gamma from Alkalilimnicola ehrlichii (strain ATCC BAA-1101 / DSM 17681 / MLHE-1).